The primary structure comprises 417 residues: Phosphoglycerate kinase 1 (417 aa).

Ser2 bears the N-acetylserine mark. A phosphoserine mark is found at Ser2 and Ser4. The residue at position 6 (Lys6) is an N6-succinyllysine. An N6-acetyllysine modification is found at Lys11. (2R)-3-phosphoglycerate is bound by residues Val23, Asp24, Phe25, Asn26, Gln38, and Arg39. The interval 38 to 43 (QRIKAA) is mitochondrial targeting region exposed following cis-trans isomerization by PIN1 and recognized by the TOM complex for mitochondrial translocation of the protein. Position 48 is an N6-acetyllysine; alternate (Lys48). At Lys48 the chain carries N6-succinyllysine; alternate. The (2R)-3-phosphoglycerate site is built by Ser62, His63, Gly65, and Arg66. Lys75 is subject to N6-acetyllysine. Tyr76 is subject to Phosphotyrosine. Residues Lys86 and Lys91 each carry the N6-acetyllysine modification. Lys97 is subject to N6-acetyllysine; alternate. Lys97 bears the N6-(2-hydroxyisobutyryl)lysine; alternate mark. Residues Leu122 and Arg123 each contribute to the (2R)-3-phosphoglycerate site. Lys131 carries the N6-acetyllysine; alternate modification. Lys131 bears the N6-malonyllysine; alternate mark. N6-acetyllysine is present on Lys146. (2R)-3-phosphoglycerate-binding residues include His170 and Arg171. An N6-succinyllysine modification is found at Lys191. Tyr196 carries the post-translational modification Phosphotyrosine. Lys199 carries the post-translational modification N6-acetyllysine. Position 203 is a phosphoserine (Ser203). ADP is bound at residue Gly214. Gly214 is a binding site for CDP. Residues Ala215 and Lys216 each contribute to the AMP site. Ala215 contributes to the ATP binding site. Ala215 contacts Mg(2+). Position 216 is an N6-(2-hydroxyisobutyryl)lysine (Lys216). Mg(2+) contacts are provided by Ala218 and Asp219. Asp219 lines the CDP pocket. Lys220 provides a ligand contact to AMP. Lys220 is an ATP binding site. Lys220 carries the post-translational modification N6-(2-hydroxyisobutyryl)lysine. An ADP-binding site is contributed by Gly238. Gly238 lines the CDP pocket. Gly239 provides a ligand contact to AMP. Gly239 provides a ligand contact to ATP. 2 positions are modified to N6-acetyllysine: Lys267 and Lys291. Residue Gly313 coordinates AMP. Gly313 is an ATP binding site. Lys323 carries the N6-(2-hydroxyisobutyryl)lysine modification. CDP is bound by residues Gly338, Val340, and Phe343. Phe343 contacts ADP. Glu344 is a binding site for AMP. Glu344 lines the ATP pocket. Lys361 is subject to N6-acetyllysine. Positions 375 and 376 each coordinate ATP. Asp375 provides a ligand contact to Mg(2+).

This sequence belongs to the phosphoglycerate kinase family. Monomer. Interacts with kinase MAPK1/ERK2; the interaction is direct, occurs under hypoxic conditions, and promotes its interaction with PIN1. Interacts with peptidyl-prolyl cis-trans isomerase PIN1; the interaction is direct, occurs under hypoxic conditions, and targets the protein to the mitochondrion by promoting interactions with the TOM complex. Interacts with mitochondrial circRNA mcPGK1 (via its 2nd stem-loop); the interaction is direct and targets the protein to the mitochondrion by promoting interactions with the TOM complex. Interacts with pyruvate dehydrogenase kinase PDK1; the interaction is direct, occurs under hypoxic conditions and leads to PDK1-mediated inhibition of pyruvate dehydrogenase complex activity. Mg(2+) serves as cofactor. Phosphorylated at Ser-203 by MAPK1/ERK2 under hypoxic conditions, which promotes its mitochondrial targeting.

The protein localises to the cytoplasm. Its subcellular location is the cytosol. It is found in the mitochondrion matrix. The enzyme catalyses (2R)-3-phosphoglycerate + ATP = (2R)-3-phospho-glyceroyl phosphate + ADP. The catalysed reaction is L-seryl-[protein] + ATP = O-phospho-L-seryl-[protein] + ADP + H(+). The protein operates within carbohydrate degradation; glycolysis; pyruvate from D-glyceraldehyde 3-phosphate: step 2/5. Its function is as follows. Catalyzes one of the two ATP producing reactions in the glycolytic pathway via the reversible conversion of 1,3-diphosphoglycerate to 3-phosphoglycerate. Both L- and D- forms of purine and pyrimidine nucleotides can be used as substrates, but the activity is much lower on pyrimidines. In addition to its role as a glycolytic enzyme, it seems that PGK-1 acts as a polymerase alpha cofactor protein (primer recognition protein). Acts as a protein kinase when localized to the mitochondrion where it phosphorylates pyruvate dehydrogenase kinase PDK1 to inhibit pyruvate dehydrogenase complex activity and suppress the formation of acetyl-coenzyme A from pyruvate, and consequently inhibit oxidative phosphorylation and promote glycolysis. May play a role in sperm motility. This Cricetulus griseus (Chinese hamster) protein is Phosphoglycerate kinase 1 (PGK1).